The following is a 431-amino-acid chain: Enolase (431 aa).

A (2R)-2-phosphoglycerate-binding site is contributed by glutamine 167. Glutamate 209 functions as the Proton donor in the catalytic mechanism. Aspartate 246, glutamate 289, and aspartate 316 together coordinate Mg(2+). (2R)-2-phosphoglycerate contacts are provided by lysine 341, arginine 370, serine 371, and lysine 392. Lysine 341 functions as the Proton acceptor in the catalytic mechanism.

The protein belongs to the enolase family. As to quaternary structure, component of the RNA degradosome, a multiprotein complex involved in RNA processing and mRNA degradation. Requires Mg(2+) as cofactor.

The protein localises to the cytoplasm. It is found in the secreted. The protein resides in the cell surface. The catalysed reaction is (2R)-2-phosphoglycerate = phosphoenolpyruvate + H2O. The protein operates within carbohydrate degradation; glycolysis; pyruvate from D-glyceraldehyde 3-phosphate: step 4/5. Functionally, catalyzes the reversible conversion of 2-phosphoglycerate (2-PG) into phosphoenolpyruvate (PEP). It is essential for the degradation of carbohydrates via glycolysis. The chain is Enolase from Shewanella baltica (strain OS223).